A 145-amino-acid polypeptide reads, in one-letter code: Peptide methionine sulfoxide reductase MsrB (145 aa).

The region spanning 4–127 is the MsrB domain; the sequence is SDELKQRIGD…NSAALKFIPY (124 aa). The Nucleophile role is filled by Cys-116.

The protein belongs to the MsrB Met sulfoxide reductase family.

The enzyme catalyses L-methionyl-[protein] + [thioredoxin]-disulfide + H2O = L-methionyl-(R)-S-oxide-[protein] + [thioredoxin]-dithiol. The sequence is that of Peptide methionine sulfoxide reductase MsrB from Streptococcus pyogenes serotype M1.